Reading from the N-terminus, the 438-residue chain is Indole diterpene prenyltransferase paxD (438 aa).

Residue 80-81 participates in L-tryptophan binding; that stretch reads FM. Residues Arg102, Lys190, Arg264, Lys266, Tyr268, Tyr349, and Tyr418 each coordinate substrate.

The protein belongs to the tryptophan dimethylallyltransferase family.

It functions in the pathway secondary metabolite biosynthesis. In terms of biological role, indole diterpene prenyltransferase; part of the gene cluster that mediates the biosynthesis of paxilline, a mycotoxin that acts as an inhibitor of mammalian maxi-K channels. PaxG, the geranylgeranyl diphosphate (GGPP) synthase is proposed to catalyze the first step in paxilline biosynthesis. Condensation of indole-3-glycerol phosphate with GGPP by paxC then forms 3-geranylgeranylindole (3-GGI), followed by epoxidation and cyclization of this intermediate (by paxM and paxB) to form paspaline. Paspaline is subsequently converted to 13-desoxypaxilline by paxP, the latter being then converted to paxilline by paxQ. Finally paxilline can be mono- and di-prenylated by paxD. This is Indole diterpene prenyltransferase paxD from Penicillium paxilli.